An 870-amino-acid polypeptide reads, in one-letter code: DNA mismatch repair protein MutS (870 aa).

622 to 629 (GPNMGGKS) contributes to the ATP binding site.

Belongs to the DNA mismatch repair MutS family.

Functionally, this protein is involved in the repair of mismatches in DNA. It is possible that it carries out the mismatch recognition step. This protein has a weak ATPase activity. This is DNA mismatch repair protein MutS from Methylibium petroleiphilum (strain ATCC BAA-1232 / LMG 22953 / PM1).